The sequence spans 332 residues: Casein kinase II subunit alpha (332 aa).

The 286-residue stretch at 34–319 (YEVVRKVGRG…ALEAMTHPYF (286 aa)) folds into the Protein kinase domain. Residues 40 to 48 (VGRGKYSEV) and lysine 63 each bind ATP. The active-site Proton acceptor is the aspartate 151.

It belongs to the protein kinase superfamily. Ser/Thr protein kinase family. CK2 subfamily. As to quaternary structure, tetramer of two alpha and two beta chains (possible).

It carries out the reaction L-seryl-[protein] + ATP = O-phospho-L-seryl-[protein] + ADP + H(+). The enzyme catalyses L-threonyl-[protein] + ATP = O-phospho-L-threonyl-[protein] + ADP + H(+). Functionally, casein kinases are operationally defined by their preferential utilization of acidic proteins such as caseins as substrates. The alpha chain contains the catalytic site. The polypeptide is Casein kinase II subunit alpha (ACK2) (Zea mays (Maize)).